Reading from the N-terminus, the 400-residue chain is Enoyl-[acyl-carrier-protein] reductase [NADH] (400 aa).

NAD(+) is bound by residues 48–53 (GSSSGY), 74–75 (FE), 111–112 (DA), and 139–140 (LA). Tyr225 is a substrate binding site. Tyr235 serves as the catalytic Proton donor. Residues Lys244 and 273 to 275 (VVT) each bind NAD(+).

The protein belongs to the TER reductase family. Monomer.

The enzyme catalyses a 2,3-saturated acyl-[ACP] + NAD(+) = a (2E)-enoyl-[ACP] + NADH + H(+). It participates in lipid metabolism; fatty acid biosynthesis. Functionally, involved in the final reduction of the elongation cycle of fatty acid synthesis (FAS II). Catalyzes the reduction of a carbon-carbon double bond in an enoyl moiety that is covalently linked to an acyl carrier protein (ACP). In Shewanella oneidensis (strain ATCC 700550 / JCM 31522 / CIP 106686 / LMG 19005 / NCIMB 14063 / MR-1), this protein is Enoyl-[acyl-carrier-protein] reductase [NADH].